Here is a 135-residue protein sequence, read N- to C-terminus: S-protein homolog 29 (135 aa).

The first 24 residues, 1–24, serve as a signal peptide directing secretion; it reads MKNSSKIFVVLSIILFYVISSCHG. A glycan (N-linked (GlcNAc...) asparagine) is linked at Asn110.

Belongs to the plant self-incompatibility (S1) protein family.

It is found in the secreted. The sequence is that of S-protein homolog 29 from Arabidopsis thaliana (Mouse-ear cress).